We begin with the raw amino-acid sequence, 320 residues long: Olfactory receptor 51E2 (320 aa).

Residues 1 to 24 (MSSCNFTHATFVLIGIPGLEKAHF) lie on the Extracellular side of the membrane. A glycan (N-linked (GlcNAc...) asparagine) is linked at Asn5. A helical transmembrane segment spans residues 25–45 (WVGFPLLSMYVVAMFGNCIVV). Residues 46–53 (FIVRTERS) lie on the Cytoplasmic side of the membrane. A helical transmembrane segment spans residues 54 to 74 (LHAPMYLFLCMLAAIDLALST). Residues 75–98 (STMPKILALFWFDSREISFEACLT) are Extracellular-facing. Cys96 and Cys178 are oxidised to a cystine. Residues 99–119 (QMFFIHALSAIESTILLAMAF) form a helical membrane-spanning segment. The Cytoplasmic segment spans residues 120-138 (DRYVAICHPLRHAAVLNNT). A helical transmembrane segment spans residues 139-159 (VTAQIGIVAVVRGSLFFFPLP). The Extracellular segment spans residues 160-195 (LLIKRLAFCHSNVLSHSYCVHQDVMKLAYADTLPNV). The helical transmembrane segment at 196–216 (VYGLTAILLVMGVDVMFISLS) threads the bilayer. Residues 217–236 (YFLIIRTVLQLPSKSERAKA) lie on the Cytoplasmic side of the membrane. Residues 237-257 (FGTCVSHIGVVLAFYVPLIGL) form a helical membrane-spanning segment. Over 258–272 (SVVHRFGNSLHPIVR) the chain is Extracellular. Residues 273–293 (VVMGDIYLLLPPVINPIIYGA) form a helical membrane-spanning segment. Residues 294–320 (KTKQIRTRVLAMFKISCDKDLQAVGGK) lie on the Cytoplasmic side of the membrane.

This sequence belongs to the G-protein coupled receptor 1 family. Highly expressed in the prostate. Also expressed in spleen, liver, olfactory epithelium, retinal pigment epithelium and medulla oblongata. In the retinal pigment epithelium expression is restricted to the pigment cells and choroid (at protein level). Expressed in epidermal melanocytes (at protein level).

The protein localises to the cell membrane. Its subcellular location is the early endosome membrane. Its function is as follows. Olfactory receptor. Activated by the odorant, beta-ionone, a synthetic terpenoid. The activity of this receptor is probably mediated by G-proteins leading to the elevation of intracellular Ca(2+), cAMP and activation of the protein kinases PKA and MAPK3/MAPK1. Stimulation of OR51E2 by beta-ionone affects melanocyte proliferation, differentiation, and melanogenesis. Activation of OR51E2 by beta-ionone increases proliferation and migration of primary retinal pigment epithelial (RPE) cells. Activated also by the short-chain fatty acids (SCFA) acetate and propionate. In response to SCFA, may positively regulate renin secretion and increase blood pressure. May also be activated by steroid hormones and regulate cell proliferation. Activated by L-lactate in glomus cells. This is Olfactory receptor 51E2 from Homo sapiens (Human).